Consider the following 65-residue polypeptide: Large ribosomal subunit protein bL35 (65 aa).

Belongs to the bacterial ribosomal protein bL35 family.

The chain is Large ribosomal subunit protein bL35 from Aliarcobacter butzleri (strain RM4018) (Arcobacter butzleri).